We begin with the raw amino-acid sequence, 238 residues long: NADH-quinone oxidoreductase subunit I (238 aa).

2 4Fe-4S ferredoxin-type domains span residues 81 to 111 (LVPR…IEAG) and 123 to 152 (VKFV…MDSG). The [4Fe-4S] cluster site is built by Cys-91, Cys-94, Cys-97, Cys-101, Cys-132, Cys-135, Cys-138, and Cys-142.

It belongs to the complex I 23 kDa subunit family. As to quaternary structure, NDH-1 is composed of 14 different subunits. Subunits NuoA, H, J, K, L, M, N constitute the membrane sector of the complex. [4Fe-4S] cluster is required as a cofactor.

Its subcellular location is the cell inner membrane. The catalysed reaction is a quinone + NADH + 5 H(+)(in) = a quinol + NAD(+) + 4 H(+)(out). Functionally, NDH-1 shuttles electrons from NADH, via FMN and iron-sulfur (Fe-S) centers, to quinones in the respiratory chain. The immediate electron acceptor for the enzyme in this species is believed to be ubiquinone. Couples the redox reaction to proton translocation (for every two electrons transferred, four hydrogen ions are translocated across the cytoplasmic membrane), and thus conserves the redox energy in a proton gradient. This chain is NADH-quinone oxidoreductase subunit I, found in Anaeromyxobacter sp. (strain Fw109-5).